We begin with the raw amino-acid sequence, 174 residues long: MFNIISKKYTQALVDSGSNLDETLSILKGLSLALKDKRNADIIASPFLSKTQKEQFLLESVGKVDMKLQNFFRLLAQSDRILLIPYISDELERRLLARKKEYAATLTAKESLDTKTLEKIQDSLAKKLGVKLSIKQRLSEVDGIKLSVEDLGIEVSFSKERFSNDLKHHILKAL.

It belongs to the ATPase delta chain family. As to quaternary structure, F-type ATPases have 2 components, F(1) - the catalytic core - and F(0) - the membrane proton channel. F(1) has five subunits: alpha(3), beta(3), gamma(1), delta(1), epsilon(1). F(0) has three main subunits: a(1), b(2) and c(10-14). The alpha and beta chains form an alternating ring which encloses part of the gamma chain. F(1) is attached to F(0) by a central stalk formed by the gamma and epsilon chains, while a peripheral stalk is formed by the delta and b chains.

It localises to the cell inner membrane. F(1)F(0) ATP synthase produces ATP from ADP in the presence of a proton or sodium gradient. F-type ATPases consist of two structural domains, F(1) containing the extramembraneous catalytic core and F(0) containing the membrane proton channel, linked together by a central stalk and a peripheral stalk. During catalysis, ATP synthesis in the catalytic domain of F(1) is coupled via a rotary mechanism of the central stalk subunits to proton translocation. Functionally, this protein is part of the stalk that links CF(0) to CF(1). It either transmits conformational changes from CF(0) to CF(1) or is implicated in proton conduction. This is ATP synthase subunit delta from Helicobacter hepaticus (strain ATCC 51449 / 3B1).